Reading from the N-terminus, the 466-residue chain is MGRQAFEFGLRPKDQFKVMQHFDLNTNHLEVLNRLYTPLIGTQAVGLYHFMTQFVKESHNETLILSHYIFMNELKINLLEFRQQMDLLEAIGLLKAFVKHDEQETQFVYQLIQPPSAHLFFNDPMLSIFLYSEVEHRRFHELKKYFEYQQIDLSEFKQVTRQFTDVFKVPSTKIDIDTSDIPINEPYQGIDLSNESFDFEMLRQMLGKHFISQDIVTKDAKRLITQLATLYGLTADGMKHVILNSITSGQQLSFEEMRKQARSYYLMEHENQMPKLQVKSPATSSSAGKSSEVNPKPQSDEWFELLEQTSPIDMLASWSESEPTISQKTMVEELIEREKMSFGVINILLQFVMLKEDMKLPKAYILEIASNWKKKGIKTAKEAYNYAKKVNQPKNEGSSGNYQKRGSYYGQRNRISKEKTPKWLENRDKPSEEDSAKDNSVDDQQLEQDRQAFLDKLSKKWEEDSQ.

The segment at 3–113 (RQAFEFGLRP…ETQFVYQLIQ (111 aa)) is DDBH1. Residues 200–292 (EMLRQMLGKH…TSSSAGKSSE (93 aa)) are DDBH2-1. A DDBH2-2 region spans residues 293-401 (VNPKPQSDEW…QPKNEGSSGN (109 aa)).

Belongs to the DnaB/DnaD family. Homotetramer, higher-order oligomers are induced by ssDNA. The DNA replisome assembles sequentially on oriC in this order; DnaA, DnaD, DnaB, DnaI-DnaC helicase. Part of the replication restart primosome, PriA binds first, then DnaD and subsequently DnaB bind.

Its function is as follows. Helps DnaI load the DnaC replicative helicase onto single-stranded (ss)DNA. During DNA replication from the origin of replication (oriC) in the DNA replisome, DnaB and DnaD are required after DnaA and before subsequent helicase DnaC loading. Component of the replication restart primosome, which reloads the replicative helicase on sites other than oriC. Essential for replication initiation of the chromosome and plasmids. Remodels DNA, laterally compacts supercoiled plasmid and linear DNA. Binds supercoiled, nicked and linear double-stranded (ds)DNA and phage phiX174 single-stranded (ss)DNA; phiX174 ssDNA is a better substrate than for B.subtilis. No binding to phage M13 ssDNA although it induces oligomers. This is Replicative helicase loading/DNA remodeling protein DnaB from Staphylococcus aureus (strain NCTC 8325 / PS 47).